The chain runs to 2262 residues: Klarsicht protein (2262 aa).

Disordered stretches follow at residues 1–140 (MEMQ…VGND), 345–410 (QQQQ…GEGN), 442–475 (AANG…LNEV), 514–561 (QSQS…PDIG), 800–832 (ATSS…DKEN), 859–898 (SNYD…QLQM), 1000–1031 (HLPP…VSPV), 1115–1157 (PSCK…SEGF), 1246–1316 (SGLA…ELGG), and 1533–1670 (VRRK…QQSR). The segment at 1–1774 (MEMQQENETG…KPTPELLDTE (1774 aa)) is required for apical microtubules localization. The Cytoplasmic segment spans residues 1 to 2215 (MEMQQENETG…KRGWAWRIAR (2215 aa)). A compositionally biased stretch (basic and acidic residues) spans 58–67 (KIEHTTKPLK). The segment covering 131 to 140 (NYGTNSVGND) has biased composition (polar residues). Low complexity predominate over residues 345–402 (QQQQLSSQQPASLTSNCSSESTSESATKSSSLSSGFASDPVTTPIGTAAAAPPSSSTH). A compositionally biased stretch (acidic residues) spans 446-475 (LDDDEDEEEDTEDDSFGYEGEATEDDLNEV). Residues 514-525 (QSQSRSQQVPSQ) show a composition bias toward low complexity. Over residues 546–560 (EADEELEEEDEDPDI) the composition is skewed to acidic residues. Composition is skewed to low complexity over residues 809 to 818 (STAVSSTTAT) and 859 to 881 (SNYD…SNSN). A compositionally biased stretch (polar residues) spans 882–894 (GRLTETSATSRVT). Low complexity predominate over residues 1006-1018 (PAKSAKSTKSQAS). The segment covering 1019-1028 (NATVSGSTLV) has biased composition (polar residues). Over residues 1246–1259 (SGLASHSISESALD) the composition is skewed to polar residues. A compositionally biased stretch (low complexity) spans 1267–1280 (PRAASSSGTGSNAA). Positions 1288–1299 (SLRRRKARKKRI) are enriched in basic residues. Residues 1550 to 1559 (QSDQQQQQLQ) show a composition bias toward low complexity. Residues 1560–1583 (VTPSLSASATALMTTPKNQSTSHQ) show a composition bias toward polar residues. 2 stretches are compositionally biased toward basic and acidic residues: residues 1586–1596 (HRAESVGRKLD) and 1610–1640 (RTSE…EKCI). Positions 1809–1842 (LTKQERRLQSALEEQEQQQESEQLKQQKLVEEEK) form a coiled coil. The disordered stretch occupies residues 2092 to 2205 (HQQKQQIQQN…GEGADPAQTS (114 aa)). A compositionally biased stretch (low complexity) spans 2093 to 2105 (QQKQQIQQNQTQQ). A compositionally biased stretch (basic residues) spans 2130–2142 (RRGKGARKARQAK). Residues 2207–2262 (RGWAWRIARAAVPMQVALFTIFCAACLMQPNCCDNLNNLSMSFTPQLRYIRGPPPI) form the KASH domain. A helical; Anchor for type IV membrane protein membrane pass occupies residues 2216-2236 (AAVPMQVALFTIFCAACLMQP). Topologically, residues 2237-2262 (NCCDNLNNLSMSFTPQLRYIRGPPPI) are perinuclear space.

This sequence belongs to the nesprin family. As to quaternary structure, core component of LINC complexes which are composed of inner nuclear membrane SUN domain-containing proteins coupled to outer nuclear membrane KASH domain-containing nesprins. Interacts with kud. Interacts with Msp300; this interaction allows the anchoring of Msp300 nuclear ring structure to the nuclear envelope. As to expression, expressed ubiquitously in the eye disk, but at much higher levels posterior to the morphogenetic furrow. Expressed in R-cells and also in non-neural cone cells.

It is found in the cytoplasm. The protein localises to the cytoskeleton. It localises to the microtubule organizing center. Its subcellular location is the perinuclear region. The protein resides in the nucleus membrane. It is found in the nucleus envelope. Its function is as follows. Component of the LINC (LInker of Nucleoskeleton and Cytoskeleton) complex involved in the connection between the nuclear lamina and the cytoskeleton. Plays a role in the nuclear positioning and links the nucleus to the microtubule organizing center (MTOC). Collaborates with Klar to promote even spacing of the myonuclei at the periphery of striated muscle fibers by mediating a tight association between a nuclear ring structure of Msp300 and the plus ends of a unique astral microtubule (MT) network. This Drosophila melanogaster (Fruit fly) protein is Klarsicht protein.